Consider the following 543-residue polypeptide: MAKILVFDEAARRALERGVNAVANAVKVTLGPRGRNVVLEKKFGSPTITKDGVTVAKEVELEDHLENIGAQLLKEVASKTNDVAGDGTTTATVLAQAIVREGLKNVAAGANPLALKRGIEKAVEAAVEKIKALAIPVEDRKAIEEVATISANDPEVGKLIADAMEKVGKEGIITVEESKSLETELKFVEGYQFDKGYISPYFVTNPETMEAVLEDAFILIVEKKVSNVRELLPILEQVAQTGKPLLIIAEDVEGEALATLVVNKLRGTLSVAAVKAPGFGDRRKEMLKDIAAVTGGTVISEELGFKLENATLSMLGRAERVRITKDETTIVGGKGKKEDIEARINGIKKELETTDSEYAREKLQERLAKLAGGVAVIRVGAATETELKEKKHRFEDALNATRAAVEEGIVPGGGVTLLRAISAVEELIKKLEGDEATGAKIVRRALEEPARQIAENAGYEGSVIVQQILAETKNPRYGFNAATGEFVDMVEAGIVDPAKVTRSALQNAASIGALILTTEAVVAEKPEKKESTPASAGAGDMDF.

ATP is bound by residues 29–32 (TLGP), Lys-50, 86–90 (DGTTT), Gly-413, 480–482 (NAA), and Asp-496. Residues 524 to 543 (EKPEKKESTPASAGAGDMDF) are disordered.

This sequence belongs to the chaperonin (HSP60) family. In terms of assembly, forms a cylinder of 14 subunits composed of two heptameric rings stacked back-to-back. Interacts with the co-chaperonin GroES.

It localises to the cytoplasm. The enzyme catalyses ATP + H2O + a folded polypeptide = ADP + phosphate + an unfolded polypeptide.. Functionally, together with its co-chaperonin GroES, plays an essential role in assisting protein folding. The GroEL-GroES system forms a nano-cage that allows encapsulation of the non-native substrate proteins and provides a physical environment optimized to promote and accelerate protein folding. This chain is Chaperonin GroEL, found in Thermus thermophilus (strain ATCC BAA-163 / DSM 7039 / HB27).